The following is a 673-amino-acid chain: Polyadenylate-binding protein, cytoplasmic and nuclear (673 aa).

The interval 1–39 (MSAETATSPAPAAETPVAPAPATQTTPAEGAPTPAAAAP) is disordered. RRM domains follow at residues 46 to 124 (ASLY…WSQR), 134 to 211 (GNIF…HHVG), 227 to 304 (TNVY…RAQT), and 330 to 407 (VNLY…LAQR). A disordered region spans residues 300–322 (GRAQTKSEREAELKKSHEEKRLE). Residues 304–322 (TKSEREAELKKSHEEKRLE) are compositionally biased toward basic and acidic residues. 2 disordered regions span residues 509-572 (APGY…AGRL) and 644-673 (WGKDEKPAADEGAEEPKKEEEETKEEEKKE). The region spanning 569-646 (AGRLDAQSLA…ALRVLAEWGK (78 aa)) is the PABC domain.

Belongs to the polyadenylate-binding protein type-1 family.

Its subcellular location is the cytoplasm. It localises to the nucleus. In terms of biological role, binds the poly(A) tail of mRNA. Appears to be an important mediator of the multiple roles of the poly(A) tail in mRNA biogenesis, stability and translation. In the nucleus, involved in both mRNA cleavage and polyadenylation. Is also required for efficient mRNA export to the cytoplasm. Acts in concert with a poly(A)-specific nuclease (PAN) to affect poly(A) tail shortening, which may occur concomitantly with either nucleocytoplasmic mRNA transport or translational initiation. In the cytoplasm, stimulates translation initiation and regulates mRNA decay through translation termination-coupled poly(A) shortening, probably mediated by PAN. In Cryptococcus neoformans var. neoformans serotype D (strain B-3501A) (Filobasidiella neoformans), this protein is Polyadenylate-binding protein, cytoplasmic and nuclear (PAB1).